Consider the following 116-residue polypeptide: Iron-sulfur cluster insertion protein ErpA (116 aa).

3 residues coordinate iron-sulfur cluster: cysteine 44, cysteine 108, and cysteine 110.

The protein belongs to the HesB/IscA family. As to quaternary structure, homodimer. Iron-sulfur cluster serves as cofactor.

Its function is as follows. Required for insertion of 4Fe-4S clusters for at least IspG. The sequence is that of Iron-sulfur cluster insertion protein ErpA from Shewanella denitrificans (strain OS217 / ATCC BAA-1090 / DSM 15013).